Reading from the N-terminus, the 937-residue chain is Isoleucine--tRNA ligase (937 aa).

The short motif at 58–68 (PYANGSIHIGH) is the 'HIGH' region element. Residue glutamate 561 coordinates L-isoleucyl-5'-AMP. The 'KMSKS' region signature appears at 602 to 606 (KMSKS). Position 605 (lysine 605) interacts with ATP. Zn(2+) contacts are provided by cysteine 900, cysteine 903, cysteine 920, and cysteine 923.

Belongs to the class-I aminoacyl-tRNA synthetase family. IleS type 1 subfamily. In terms of assembly, monomer. The cofactor is Zn(2+).

It localises to the cytoplasm. The enzyme catalyses tRNA(Ile) + L-isoleucine + ATP = L-isoleucyl-tRNA(Ile) + AMP + diphosphate. Its function is as follows. Catalyzes the attachment of isoleucine to tRNA(Ile). As IleRS can inadvertently accommodate and process structurally similar amino acids such as valine, to avoid such errors it has two additional distinct tRNA(Ile)-dependent editing activities. One activity is designated as 'pretransfer' editing and involves the hydrolysis of activated Val-AMP. The other activity is designated 'posttransfer' editing and involves deacylation of mischarged Val-tRNA(Ile). The sequence is that of Isoleucine--tRNA ligase from Photorhabdus laumondii subsp. laumondii (strain DSM 15139 / CIP 105565 / TT01) (Photorhabdus luminescens subsp. laumondii).